A 509-amino-acid polypeptide reads, in one-letter code: Transcription factor atf-7 (509 aa).

Residues 283–303 (TVSSYHSPLGASSQPPSTQKS) are compositionally biased toward polar residues. Disordered regions lie at residues 283–318 (TVSS…EKQI) and 337–400 (NMSS…ILER). Positions 308–318 (SWDHINGEKQI) are enriched in basic and acidic residues. Residues 337–364 (NMSSSGSDQDQSADMSNAGSTASTSTGN) are compositionally biased toward low complexity. Positions 390–400 (PDERRNTILER) are enriched in basic and acidic residues. A bZIP domain is found at 391–464 (DERRNTILER…TERESRCVCL (74 aa)). The tract at residues 393 to 413 (RRNTILERNKAAAVRYRKRKK) is basic motif. Positions 419-450 (MMGRVQAMEAEKNQLLAIQTQNQVLRRELERV) are leucine-zipper.

It belongs to the bZIP family. As to quaternary structure, interacts with serine/threonine kinase pmk-1; perhaps in a manner dependent on dual specificity protein kinase sek-1. As to expression, expressed in intestinal cells.

It localises to the nucleus. Its subcellular location is the chromosome. Its function is as follows. Transcription factor which regulates the transcription of various genes, including those involved in innate immunity and oxidative stress responses. Binds to promoter regions of genes, probably at 5'-[GACGTCA]-3' consensus sequences. Together with transcription factor daf-19, involved in regulation of the serotonergic response of ADF neurons to pathogenic food. Modulates response to infection by the Gram-negative bacterium P.aeruginosa, acting downstream of the p38 signal transduction pathway effector serine/threonine kinase pmk-1. May act with transcription factor elt-2 to control p38 gene induction in response to bacterial infection. May be phosphorylated by pmk-1. Regulates transcription of the metallothionein gene, mtl-1, perhaps acting downstream of pmk-1. In Caenorhabditis elegans, this protein is Transcription factor atf-7.